We begin with the raw amino-acid sequence, 173 residues long: Dual-action ribosomal maturation protein DarP (173 aa).

This sequence belongs to the DarP family.

The protein resides in the cytoplasm. Its function is as follows. Member of a network of 50S ribosomal subunit biogenesis factors which assembles along the 30S-50S interface, preventing incorrect 23S rRNA structures from forming. Promotes peptidyl transferase center (PTC) maturation. The protein is Dual-action ribosomal maturation protein DarP of Pseudomonas putida (strain GB-1).